The following is a 551-amino-acid chain: Cytochrome c lysine N-methyltransferase 1 (551 aa).

The SET domain occupies 46 to 273; the sequence is DKIELLRVSS…PNTEVLITYK (228 aa). Positions 184–288 are SET-like; the sequence is IELLRQIYSA…LAMITKYGFD (105 aa).

The protein belongs to the class V-like SAM-binding methyltransferase superfamily.

The protein resides in the cytoplasm. It localises to the cytosol. It catalyses the reaction L-lysyl-[cytochrome c] + S-adenosyl-L-methionine = N(6)-methyl-L-lysyl-[cytochrome c] + S-adenosyl-L-homocysteine + H(+). Functionally, methyltransferase which mediates trimethylation of cytochrome c (CYC1). The protein is Cytochrome c lysine N-methyltransferase 1 (CTM1) of Candida glabrata (strain ATCC 2001 / BCRC 20586 / JCM 3761 / NBRC 0622 / NRRL Y-65 / CBS 138) (Yeast).